A 96-amino-acid polypeptide reads, in one-letter code: Aspartyl/glutamyl-tRNA(Asn/Gln) amidotransferase subunit C (96 aa).

This sequence belongs to the GatC family. As to quaternary structure, heterotrimer of A, B and C subunits.

The enzyme catalyses L-glutamyl-tRNA(Gln) + L-glutamine + ATP + H2O = L-glutaminyl-tRNA(Gln) + L-glutamate + ADP + phosphate + H(+). It catalyses the reaction L-aspartyl-tRNA(Asn) + L-glutamine + ATP + H2O = L-asparaginyl-tRNA(Asn) + L-glutamate + ADP + phosphate + 2 H(+). In terms of biological role, allows the formation of correctly charged Asn-tRNA(Asn) or Gln-tRNA(Gln) through the transamidation of misacylated Asp-tRNA(Asn) or Glu-tRNA(Gln) in organisms which lack either or both of asparaginyl-tRNA or glutaminyl-tRNA synthetases. The reaction takes place in the presence of glutamine and ATP through an activated phospho-Asp-tRNA(Asn) or phospho-Glu-tRNA(Gln). In Fusobacterium nucleatum subsp. nucleatum (strain ATCC 25586 / DSM 15643 / BCRC 10681 / CIP 101130 / JCM 8532 / KCTC 2640 / LMG 13131 / VPI 4355), this protein is Aspartyl/glutamyl-tRNA(Asn/Gln) amidotransferase subunit C.